The primary structure comprises 344 residues: Methionine import ATP-binding protein MetN (344 aa).

The ABC transporter domain occupies 2 to 241 (IEINQVNKVF…PKTELAHDFI (240 aa)). 38–45 (GSSGAGKS) contacts ATP.

This sequence belongs to the ABC transporter superfamily. Methionine importer (TC 3.A.1.24) family. In terms of assembly, the complex is composed of two ATP-binding proteins (MetN), two transmembrane proteins (MetI) and a solute-binding protein (MetQ).

The protein localises to the cell inner membrane. The enzyme catalyses L-methionine(out) + ATP + H2O = L-methionine(in) + ADP + phosphate + H(+). The catalysed reaction is D-methionine(out) + ATP + H2O = D-methionine(in) + ADP + phosphate + H(+). In terms of biological role, part of the ABC transporter complex MetNIQ involved in methionine import. Responsible for energy coupling to the transport system. This is Methionine import ATP-binding protein MetN from Vibrio vulnificus (strain CMCP6).